Reading from the N-terminus, the 457-residue chain is Exodeoxyribonuclease 7 large subunit (457 aa).

It belongs to the XseA family. In terms of assembly, heterooligomer composed of large and small subunits.

Its subcellular location is the cytoplasm. The catalysed reaction is Exonucleolytic cleavage in either 5'- to 3'- or 3'- to 5'-direction to yield nucleoside 5'-phosphates.. Functionally, bidirectionally degrades single-stranded DNA into large acid-insoluble oligonucleotides, which are then degraded further into small acid-soluble oligonucleotides. This is Exodeoxyribonuclease 7 large subunit from Escherichia coli O127:H6 (strain E2348/69 / EPEC).